The primary structure comprises 475 residues: UDP-N-acetylmuramate--L-alanine ligase (475 aa).

114–120 (GTHGKTT) provides a ligand contact to ATP.

Belongs to the MurCDEF family.

It is found in the cytoplasm. The catalysed reaction is UDP-N-acetyl-alpha-D-muramate + L-alanine + ATP = UDP-N-acetyl-alpha-D-muramoyl-L-alanine + ADP + phosphate + H(+). It participates in cell wall biogenesis; peptidoglycan biosynthesis. In terms of biological role, cell wall formation. This Bartonella henselae (strain ATCC 49882 / DSM 28221 / CCUG 30454 / Houston 1) (Rochalimaea henselae) protein is UDP-N-acetylmuramate--L-alanine ligase.